We begin with the raw amino-acid sequence, 565 residues long: Hemagglutinin-neuraminidase (565 aa).

The Intravirion segment spans residues 1-20; the sequence is MVAEDAPVRGTCRVLFRTTT. The helical transmembrane segment at 21 to 41 threads the bilayer; it reads LIFLCTLLALSISILYESLII. Over 42 to 565 the chain is Virion surface; sequence RKQIMSQAGS…VPFIRQVTLS (524 aa). Asn110 and Asn139 each carry an N-linked (GlcNAc...) asparagine; by host glycan. Intrachain disulfides connect Cys161/Cys185, Cys175/Cys236, and Cys227/Cys240. The interval 223–228 is involved in neuraminidase activity; that stretch reads NRKSCS. N-linked (GlcNAc...) asparagine; by host glycosylation occurs at Asn267. 3 disulfide bridges follow: Cys333–Cys454, Cys365–Cys375, and Cys448–Cys458. An N-linked (GlcNAc...) asparagine; by host glycan is attached at Asn504. Cys528 and Cys539 are oxidised to a cystine.

It belongs to the paramyxoviruses hemagglutinin-neuraminidase family. As to quaternary structure, homotetramer; composed of disulfide-linked homodimers. Interacts with F protein trimer.

It localises to the virion membrane. Its subcellular location is the host cell membrane. The catalysed reaction is Hydrolysis of alpha-(2-&gt;3)-, alpha-(2-&gt;6)-, alpha-(2-&gt;8)- glycosidic linkages of terminal sialic acid residues in oligosaccharides, glycoproteins, glycolipids, colominic acid and synthetic substrates.. In terms of biological role, attaches the virus to sialic acid-containing cell receptors and thereby initiating infection. Binding of HN protein to the receptor induces a conformational change that allows the F protein to trigger virion/cell membranes fusion. Its function is as follows. Neuraminidase activity ensures the efficient spread of the virus by dissociating the mature virions from the neuraminic acid containing glycoproteins. The sequence is that of Hemagglutinin-neuraminidase (HN) from Canis lupus familiaris (Dog).